A 229-amino-acid polypeptide reads, in one-letter code: Ribonuclease HII (229 aa).

The 188-residue stretch at 42-229 (TRIAGVDEVG…KPVHKILYQE (188 aa)) folds into the RNase H type-2 domain. A divalent metal cation-binding residues include D48, E49, and D139.

The protein belongs to the RNase HII family. Mn(2+) is required as a cofactor. Mg(2+) serves as cofactor.

Its subcellular location is the cytoplasm. It catalyses the reaction Endonucleolytic cleavage to 5'-phosphomonoester.. Endonuclease that specifically degrades the RNA of RNA-DNA hybrids. The protein is Ribonuclease HII of Ruegeria sp. (strain TM1040) (Silicibacter sp.).